A 372-amino-acid polypeptide reads, in one-letter code: Serine protease 44 (372 aa).

Positions 1 to 25 (MAFQGCDCFGLLVWLLLLQTRLGKA) are cleaved as a signal peptide. At 26–351 (RMVPGTPSLS…KELSRASCWK (326 aa)) the chain is on the extracellular side. Residues 31–72 (TPSLSPLPSENGLDDSGVNPQERPLTGMPETSLPRKPGDSTR) are disordered. The region spanning 112 to 345 (IVGGRPAPAR…YRDWIIKELS (234 aa)) is the Peptidase S1 domain. The cysteines at positions 137 and 153 are disulfide-linked. Catalysis depends on charge relay system residues histidine 152 and aspartate 197. N-linked (GlcNAc...) asparagine glycosylation is present at asparagine 208. 3 disulfide bridges follow: cysteine 231–cysteine 303, cysteine 262–cysteine 283, and cysteine 293–cysteine 321. The active-site Charge relay system is the serine 297. The chain crosses the membrane as a helical span at residues 352–372 (LSGFLVLSVCLVLHLAIVVAL).

It belongs to the peptidase S1 family. As to expression, testis-specific. Expressed by primary and secondary spermatocytes.

It localises to the membrane. The protein resides in the cytoplasm. Its function is as follows. Lacks protease activity in vitro. This is Serine protease 44 from Mus musculus (Mouse).